We begin with the raw amino-acid sequence, 274 residues long: MPFRSNNPLTRDELLSRFFPQFHPVTTFNSGLSGGSFLIEHQGQRFVVRQPHDPDAPQSAFLRQYRALSQLPACIAPKPHLYLRDWMVVDYLPGEVKTYLPDTNELAGLLYYLHQQPRFGWRITLLPLLELYWQQSDPARRTVGWLRRLKRLHKAREPRPLRLSPLHMDVHAGNLVHSASGLKLIDWEYAGDGDIALELAAVWVENTDQHRQLVNDYATRAKIYPAQLWRQVRRWFPWLLMLKAGWFEYRWRQTGDQQFIRLADDTWRQLLIKQ.

It belongs to the thiamine kinase family.

The enzyme catalyses thiamine + ATP = thiamine phosphate + ADP + H(+). Its pathway is cofactor biosynthesis; thiamine diphosphate biosynthesis; thiamine phosphate from thiamine: step 1/1. Catalyzes the ATP-dependent phosphorylation of thiamine to thiamine phosphate. Is involved in thiamine salvage. This chain is Thiamine kinase, found in Escherichia coli (strain SMS-3-5 / SECEC).